The sequence spans 265 residues: Cytochrome c oxidase subunit 3 (265 aa).

The next 7 membrane-spanning stretches (helical) occupy residues P16–M36, G41–W61, G81–F101, T137–G157, A162–M182, F200–I220, and W245–I265.

Belongs to the cytochrome c oxidase subunit 3 family. Component of the cytochrome c oxidase (complex IV, CIV), a multisubunit enzyme composed of a catalytic core of 3 subunits and several supernumerary subunits. The complex exists as a monomer or a dimer and forms supercomplexes (SCs) in the inner mitochondrial membrane with ubiquinol-cytochrome c oxidoreductase (cytochrome b-c1 complex, complex III, CIII).

It localises to the mitochondrion inner membrane. The catalysed reaction is 4 Fe(II)-[cytochrome c] + O2 + 8 H(+)(in) = 4 Fe(III)-[cytochrome c] + 2 H2O + 4 H(+)(out). Its function is as follows. Component of the cytochrome c oxidase, the last enzyme in the mitochondrial electron transport chain which drives oxidative phosphorylation. The respiratory chain contains 3 multisubunit complexes succinate dehydrogenase (complex II, CII), ubiquinol-cytochrome c oxidoreductase (cytochrome b-c1 complex, complex III, CIII) and cytochrome c oxidase (complex IV, CIV), that cooperate to transfer electrons derived from NADH and succinate to molecular oxygen, creating an electrochemical gradient over the inner membrane that drives transmembrane transport and the ATP synthase. Cytochrome c oxidase is the component of the respiratory chain that catalyzes the reduction of oxygen to water. Electrons originating from reduced cytochrome c in the intermembrane space (IMS) are transferred via the dinuclear copper A center (CU(A)) of subunit 2 and heme A of subunit 1 to the active site in subunit 1, a binuclear center (BNC) formed by heme A3 and copper B (CU(B)). The BNC reduces molecular oxygen to 2 water molecules using 4 electrons from cytochrome c in the IMS and 4 protons from the mitochondrial matrix. This Vicia faba (Broad bean) protein is Cytochrome c oxidase subunit 3 (COX3).